A 166-amino-acid chain; its full sequence is Succinate dehydrogenase [ubiquinone] cytochrome b small subunit, mitochondrial (166 aa).

Residues 1–65 (MASVARSSAL…VPPPSPSHGS (65 aa)) are Mitochondrial matrix-facing. The helical transmembrane segment at 66–87 (YHWTFDRVVAAGLIPLTVAPFA) threads the bilayer. Topologically, residues 88-94 (AGSLNPT) are mitochondrial intermembrane. The helical transmembrane segment at 95–115 (MDAVLAATILIHSHTGFGNII) threads the bilayer. Histidine 106 lines the heme pocket. The Mitochondrial matrix segment spans residues 116 to 124 (VDYVPSKRV). Tyrosine 118 is a binding site for a ubiquinone. A helical transmembrane segment spans residues 125 to 149 (PKARKVFTWGLNAATVLVGLALYEF). At 150 to 166 (ETTDVGLTETIKRVWKA) the chain is on the mitochondrial intermembrane side.

The protein belongs to the CybS family. As to quaternary structure, forms part of complex II containing four subunits: a flavoprotein (FP), an iron-sulfur protein (IP) and a cytochrome b composed of a large and a small subunit.

It is found in the mitochondrion inner membrane. Its pathway is carbohydrate metabolism; tricarboxylic acid cycle. Functionally, membrane-anchoring subunit of succinate dehydrogenase (SDH) that is involved in complex II of the mitochondrial electron transport chain and is responsible for transferring electrons from succinate to ubiquinone (coenzyme Q). The polypeptide is Succinate dehydrogenase [ubiquinone] cytochrome b small subunit, mitochondrial (Neurospora crassa (strain ATCC 24698 / 74-OR23-1A / CBS 708.71 / DSM 1257 / FGSC 987)).